Here is a 471-residue protein sequence, read N- to C-terminus: N(6)-adenine-specific methyltransferase METTL4 (471 aa).

Belongs to the MT-A70-like family.

The protein resides in the nucleus. The catalysed reaction is a 2'-O-methyladenosine in U2 snRNA + S-adenosyl-L-methionine = an N(6)-methyl-2'-O-methyladenosine in U2 snRNA + S-adenosyl-L-homocysteine + H(+). It carries out the reaction a 2'-deoxyadenosine in DNA + S-adenosyl-L-methionine = an N(6)-methyl-2'-deoxyadenosine in DNA + S-adenosyl-L-homocysteine + H(+). Functionally, n(6)-adenine-specific methyltransferase that can methylate both RNAs and DNA. Acts as a N(6)-adenine-specific RNA methyltransferase by catalyzing formation of N6,2'-O-dimethyladenosine (m6A(m)) on internal positions of U2 small nuclear RNA (snRNA): methylates the 6th position of adenine residues with a pre-deposited 2'-O-methylation. Internal m6A(m) methylation of snRNAs regulates RNA splicing. Also able to act as a N(6)-adenine-specific DNA methyltransferase by mediating methylation of DNA on the 6th position of adenine (N(6)-methyladenosine). The existence of N(6)-methyladenosine (m6A) on DNA is however unclear in mammals, and additional evidences are required to confirm the role of the N(6)-adenine-specific DNA methyltransferase activity of METTL4 in vivo. Acts as a regulator of mitochondrial transcript levels and mitochondrial DNA (mtDNA) copy number by mediating mtDNA N(6)-methylation: m6A on mtDNA reduces transcription by repressing TFAM DNA-binding and bending. N(6)-methyladenosine deposition by METTL4 regulates Polycomb silencing by triggering ubiquitination and degradation of sensor proteins ASXL1 and MPND, leading to inactivation of the PR-DUB complex and subsequent preservation of Polycomb silencing. The polypeptide is N(6)-adenine-specific methyltransferase METTL4 (Mus musculus (Mouse)).